The following is a 334-amino-acid chain: Biotin synthase (334 aa).

Positions 48-275 (NQVQTSQLLS…RSMVRLSAGR (228 aa)) constitute a Radical SAM core domain. Residues Cys-63, Cys-67, and Cys-70 each coordinate [4Fe-4S] cluster. The [2Fe-2S] cluster site is built by Cys-107, Cys-138, Cys-198, and Arg-270.

The protein belongs to the radical SAM superfamily. Biotin synthase family. Homodimer. [4Fe-4S] cluster serves as cofactor. It depends on [2Fe-2S] cluster as a cofactor.

It catalyses the reaction (4R,5S)-dethiobiotin + (sulfur carrier)-SH + 2 reduced [2Fe-2S]-[ferredoxin] + 2 S-adenosyl-L-methionine = (sulfur carrier)-H + biotin + 2 5'-deoxyadenosine + 2 L-methionine + 2 oxidized [2Fe-2S]-[ferredoxin]. Its pathway is cofactor biosynthesis; biotin biosynthesis; biotin from 7,8-diaminononanoate: step 2/2. In terms of biological role, catalyzes the conversion of dethiobiotin (DTB) to biotin by the insertion of a sulfur atom into dethiobiotin via a radical-based mechanism. This Maricaulis maris (strain MCS10) (Caulobacter maris) protein is Biotin synthase.